Reading from the N-terminus, the 447-residue chain is Acid phosphatase (447 aa).

The N-terminal stretch at 1 to 17 is a signal peptide; that stretch reads MKPSVATLLATVSLVYA. N-linked (GlcNAc...) asparagine glycosylation is found at N119, N150, N177, N186, and N208. Catalysis depends on D215, which acts as the Proton donor. N217, N234, N240, N315, N332, N382, and N405 each carry an N-linked (GlcNAc...) asparagine glycan. A lipid anchor (GPI-like-anchor amidated serine) is attached at S419. Positions 420–447 are cleaved as a propeptide — removed in mature form; that stretch reads ASSNAAVSAVAPAAGVSGLLLGLALNLL.

Post-translationally, the GPI-like anchor contains a phosphoceramide lipid group. The anchor position has not been determined.

It localises to the cell membrane. It carries out the reaction a phosphate monoester + H2O = an alcohol + phosphate. Inhibited by NaF, molybdate and vanadate. Has both phosphomonoesterase and phosphodiesterase activity. Cleaves a broad range of phosphate esters. The polypeptide is Acid phosphatase (phoA) (Aspergillus fumigatus (strain ATCC MYA-4609 / CBS 101355 / FGSC A1100 / Af293) (Neosartorya fumigata)).